We begin with the raw amino-acid sequence, 347 residues long: MRIEEDLKLGFKDVLIRPKRSTLKSRSDVELERQFTFKYSGQTWSGVPIIAANMDTVGTFEMAQALAGFDILTAVHKHYTVEEWAAFINTASADVLKHVMVSTGTSDADFEKTVQILALNPALNFVCIDVANGYSEHFVQFVAKAREAWPTKTICAGNVVTGEMCEEPILSGADIVKVGIGPGSVCTTRVKTGVGYPQLSAVIECADAAHGLGGMIVSDGGCTMPGDVAKAFGGGADFVMLGGMLAGHEESGGSVVEENGEKFMLFYGMSSESAMNRHVGGVAKYRAAEGKTVKLPLRGPVGNTARDILGGLRSACTYVGASRLKELTKRTTFIRVQEQENRIFNSL.

Position 108–131 (108–131) interacts with NADP(+); the sequence is ADFEKTVQILALNPALNFVCIDVA. The K(+) site is built by G181 and G183. The active-site Thioimidate intermediate is C186. Residue 216-239 participates in NADP(+) binding; sequence IVSDGGCTMPGDVAKAFGGGADFV.

It belongs to the IMPDH/GMPR family. GuaC type 1 subfamily. As to quaternary structure, homotetramer.

The enzyme catalyses IMP + NH4(+) + NADP(+) = GMP + NADPH + 2 H(+). In terms of biological role, catalyzes the irreversible NADPH-dependent deamination of GMP to IMP. It functions in the conversion of nucleobase, nucleoside and nucleotide derivatives of G to A nucleotides, and in maintaining the intracellular balance of A and G nucleotides. The sequence is that of GMP reductase from Salmonella choleraesuis (strain SC-B67).